A 754-amino-acid chain; its full sequence is Phosphatase and actin regulator 4B (754 aa).

Basic and acidic residues predominate over residues Met-1–His-12. 4 disordered regions span residues Met-1–Leu-38, Lys-83–His-105, Val-120–Gln-625, and Leu-637–Ala-666. The stretch at Glu-61 to Pro-86 is one RPEL 1 repeat. Basic and acidic residues-rich tracts occupy residues Pro-138–Gly-153, His-184–Trp-221, and Ser-229–Asp-241. 2 stretches are compositionally biased toward low complexity: residues Ser-296–Ser-307 and Ser-316–Ser-333. Composition is skewed to pro residues over residues Lys-348 to Pro-357, Lys-381 to Arg-390, Leu-427 to Pro-445, and Tyr-460 to Asp-478. Composition is skewed to acidic residues over residues Asp-483–Pro-503, Ser-541–Ser-557, and Asp-566–Ser-576. Over residues Gln-605–His-615 the composition is skewed to basic and acidic residues. RPEL repeat units lie at residues Thr-635–Asn-660 and Arg-673–Glu-698. Position 642 is a phosphoserine (Ser-642).

Belongs to the phosphatase and actin regulator family. As to quaternary structure, binds ppp1ca and actin.

It is found in the cytoplasm. The protein resides in the cell projection. The protein localises to the lamellipodium. In terms of biological role, regulator of protein phosphatase 1 (PP1) required for neural tube and optic fissure closure, and enteric neural crest cell (ENCCs) migration during development. Acts as an activator of PP1. During neural tube closure, localizes to the ventral neural tube and activates PP1, leading to down-regulate cell proliferation within cranial neural tissue and the neural retina. Also acts as a regulator of migration of enteric neural crest cells (ENCCs) by activating PP1, leading to repression of the integrin signaling through the rho/rock pathway. The chain is Phosphatase and actin regulator 4B (phactr4b) from Danio rerio (Zebrafish).